Consider the following 230-residue polypeptide: RING finger protein 141 (230 aa).

Glycine 2 is lipidated: N-myristoyl glycine. An RING-type zinc finger spans residues 155-192 (CCICMDGRADLILPCAHSFCQKCIDKWSDRHRNCPICR).

The protein localises to the membrane. Its function is as follows. May be involved in spermatogenesis. This chain is RING finger protein 141 (RNF141), found in Pongo abelii (Sumatran orangutan).